The chain runs to 468 residues: Spliceosome-associated protein CWC27 homolog (468 aa).

Ser2 is subject to N-acetylserine. One can recognise a PPIase cyclophilin-type domain in the interval 11–166; sequence TNGKVLLKTT…NPHRIKSCEV (156 aa). Disordered regions lie at residues 204 to 382 and 427 to 468; these read LLSF…EDQT and RKVK…KERR. A coiled-coil region spans residues 206–229; that stretch reads SFGEEAEEEEEEVNRVSQSMKGRS. Basic and acidic residues predominate over residues 231–241; it reads SSHDLLKDDPH. Residues 256 to 268 are compositionally biased toward acidic residues; sequence TGDLEDDAEDDSV. Basic and acidic residues-rich tracts occupy residues 269-287 and 302-342; these read EHDGSMEEDEKNLMRERIA and GDGE…AEKG. Phosphoserine is present on Ser273. Residues 309–342 are a coiled coil; sequence ASRSEELRKEARQLKRELLAAKQKKESATKAEKG. Phosphoserine is present on Ser343. 2 stretches are compositionally biased toward basic and acidic residues: residues 356–368 and 453–468; these read EYRREKQKYEALR and RREESKKLLREKKERR.

Belongs to the cyclophilin-type PPIase family. As to quaternary structure, part of the activated spliceosome B/catalytic step 1 spliceosome, one of the forms of the spliceosome which has a well-formed active site but still cannot catalyze the branching reaction and is composed at least of 52 proteins, the U2, U5 and U6 snRNAs and the pre-mRNA. Recruited during early steps of activated spliceosome B maturation, it is probably one of the first proteins released from this complex as he matures to the spliceosome C complex. Component of the minor spliceosome, which splices U12-type introns.

It is found in the nucleus. Its function is as follows. As part of the spliceosome, plays a role in pre-mRNA splicing. Probable inactive PPIase with no peptidyl-prolyl cis-trans isomerase activity. As a component of the minor spliceosome, involved in the splicing of U12-type introns in pre-mRNAs. This is Spliceosome-associated protein CWC27 homolog from Rattus norvegicus (Rat).